Reading from the N-terminus, the 318-residue chain is NADH-ubiquinone oxidoreductase chain 1 (318 aa).

A run of 8 helical transmembrane segments spans residues Pro2–Leu22, Ile68–Pro88, Leu100–Gly120, Leu146–Ile166, His171–Ala191, Ile231–Ser251, Glu253–Ile273, and Leu294–Ile314.

The protein belongs to the complex I subunit 1 family. As to quaternary structure, core subunit of respiratory chain NADH dehydrogenase (Complex I) which is composed of 45 different subunits.

Its subcellular location is the mitochondrion inner membrane. The enzyme catalyses a ubiquinone + NADH + 5 H(+)(in) = a ubiquinol + NAD(+) + 4 H(+)(out). Functionally, core subunit of the mitochondrial membrane respiratory chain NADH dehydrogenase (Complex I) which catalyzes electron transfer from NADH through the respiratory chain, using ubiquinone as an electron acceptor. Essential for the catalytic activity and assembly of complex I. The chain is NADH-ubiquinone oxidoreductase chain 1 (MT-ND1) from Homo sapiens (Human).